Consider the following 108-residue polypeptide: Transmembrane protein 265 (108 aa).

2 helical membrane-spanning segments follow: residues 34-54 (AATS…VFAI) and 78-98 (LILA…LLLW).

It belongs to the CD225/Dispanin family.

Its subcellular location is the membrane. This Homo sapiens (Human) protein is Transmembrane protein 265.